We begin with the raw amino-acid sequence, 239 residues long: Ribonuclease PH (239 aa).

Residues Arg-86 and 124–126 each bind phosphate; that span reads GTR.

This sequence belongs to the RNase PH family. In terms of assembly, homohexameric ring arranged as a trimer of dimers.

The catalysed reaction is tRNA(n+1) + phosphate = tRNA(n) + a ribonucleoside 5'-diphosphate. Its function is as follows. Phosphorolytic 3'-5' exoribonuclease that plays an important role in tRNA 3'-end maturation. Removes nucleotide residues following the 3'-CCA terminus of tRNAs; can also add nucleotides to the ends of RNA molecules by using nucleoside diphosphates as substrates, but this may not be physiologically important. Probably plays a role in initiation of 16S rRNA degradation (leading to ribosome degradation) during starvation. The sequence is that of Ribonuclease PH from Sinorhizobium fredii (strain NBRC 101917 / NGR234).